A 422-amino-acid polypeptide reads, in one-letter code: GTPase Obg (422 aa).

Positions methionine 1 to leucine 158 constitute an Obg domain. Residues alanine 159–glutamate 329 enclose the OBG-type G domain. GTP contacts are provided by residues glycine 165–serine 172, phenylalanine 190–threonine 194, aspartate 212–glycine 215, asparagine 282–aspartate 285, and serine 310–valine 312. Residues serine 172 and threonine 192 each coordinate Mg(2+). An OCT domain is found at valine 337–glutamate 422.

It belongs to the TRAFAC class OBG-HflX-like GTPase superfamily. OBG GTPase family. Monomer. The cofactor is Mg(2+).

It is found in the cytoplasm. An essential GTPase which binds GTP, GDP and possibly (p)ppGpp with moderate affinity, with high nucleotide exchange rates and a fairly low GTP hydrolysis rate. Plays a role in control of the cell cycle, stress response, ribosome biogenesis and in those bacteria that undergo differentiation, in morphogenesis control. In Pelotomaculum thermopropionicum (strain DSM 13744 / JCM 10971 / SI), this protein is GTPase Obg.